We begin with the raw amino-acid sequence, 1002 residues long: MVGCWVALALVLPMAVPSLAEMAQRHPVAVLPADAPSSVAVRQMAEAFHESGSENILVVLLTDEKGLGAADENVYHTLVDRLRNDAKDVVMLQDFLTTPPLREVLGSKDGKAWILPIGLAGDLGTPKSYHAYTDVERIVKRTVAGTTLTANVTGPAATVADLTDAGARDRASIELAIAVMLLVILMVIYRNPVTMLLPLVTIGASLMTAQALVAGVSLVGGLAVSNQAIVLLSAMIAGAGTDYAVFLISRYHEYVRLGEHPERAVQRAMMSVGKVIAASAATVGITFLGMRFAKLGVFSTVGPALAIGIAVSFLAAVTLLPAILVLASPRGWVAPRGERMATFWRRAGTRIVRRPKAYLGASLIGLVALASCASLAHFNYDDRKQLPPSDPSSVGYAAMEHHFSVNQTIPEYLIIHSAHDLRTPRGLADLEQLAQRVSQIPGVAMVRGVTRPNGETLEQARATYQAGQVGNRLGGASRMIDERTGDLNRLASGANLLADNLGDVRGQVSRAVAGVRSLVDALAYIQNQFGGNKTFNEIDNAARLVSNIHALGDALQVNFDGIANSFDWLDSVVAALDTSPVCDSNPMCGNARVQFHKLQTARDNGTLDKVVGLARQLQSTRSPQTVSAVVNDLGRSLNSVVRSLKSLGLDNPDAARARLISMQNGANDLASAGRQVADGVQMLVDQTKNMGIGLNQASAFLMAMGNDASQPSMAGFNVPPQVLKSEEFKKVAQAFISPDGHTVRYFIQTDLNPFSTAAMDQVNTIIDTAKGAQPNTSLADASISMSGYPVMLRDIRDYYERDMRLIVAVTVVVVILILMALLRAIVAPLYLVGSVVISYMSAIGLGVVVFQVFLGQELHWSVPGLAFVVLVAVGADYNMLLASRLRDESALGVRSSVIRTVRCTGGVITAAGLIFAASMSGLLFSSIGTVVQGGFIIGVGILIDTFVVRTITVPAMATLLGRASWWPGHPWQRCAPEEGQMSARMSARTKTVFQAVADGSKR.

12 helical membrane passes run 1 to 21 (MVGC…SLAE), 177 to 197 (IAVM…TMLL), 199 to 219 (LVTI…VSLV), 228 to 248 (AIVL…VFLI), 268 to 288 (AMMS…ITFL), 306 to 326 (AIGI…ILVL), 358 to 378 (YLGA…LAHF), 806 to 826 (IVAV…RAIV), 835 to 855 (VVIS…VFLG), 862 to 882 (VPGL…MLLA), 901 to 921 (VRCT…SMSG), and 923 to 943 (LFSS…GILI).

The protein belongs to the resistance-nodulation-cell division (RND) (TC 2.A.6) family. MmpL subfamily.

Its subcellular location is the cell membrane. The chain is Probable transport protein MmpL10 (mmpL10) from Mycobacterium bovis (strain ATCC BAA-935 / AF2122/97).